The following is a 489-amino-acid chain: Cytochrome P450 2C70 (489 aa).

The signal sequence occupies residues 1-27 (MALFIFLGIWLSCFLFLFLWNQHRGRG). Residue Cys-434 coordinates heme.

Belongs to the cytochrome P450 family. It depends on heme as a cofactor. In terms of tissue distribution, expressed in liver.

The protein resides in the endoplasmic reticulum membrane. It is found in the microsome membrane. It carries out the reaction chenodeoxycholate + reduced [NADPH--hemoprotein reductase] + O2 = alpha-muricholate + oxidized [NADPH--hemoprotein reductase] + H2O + H(+). The enzyme catalyses ursodeoxycholate + reduced [NADPH--hemoprotein reductase] + O2 = beta-muricholate + oxidized [NADPH--hemoprotein reductase] + H2O + H(+). A cytochrome P450 monooxygenase involved in muricholic acid (MCA) synthesis. Hydroxylates at the 6-beta position two major bile acids, chenodeoxycholic acid (CDCA) and ursodeoxycholic acid (UDCA) to form alpha-MCA and beta-MCA, respectively. May regulate NR1H4/farnesoid X receptor signaling, as taurine-conjugated MCAs are antagonists of NR1H4. Mechanistically, uses molecular oxygen inserting one oxygen atom into a substrate, and reducing the second into a water molecule, with two electrons provided by NADPH via cytochrome P450 reductase (CPR; NADPH-ferrihemoprotein reductase). The sequence is that of Cytochrome P450 2C70 from Mus musculus (Mouse).